We begin with the raw amino-acid sequence, 569 residues long: uncharacterized protein (569 aa).

A signal peptide spans 1–21; sequence MLCVMMLLFSAIASFPVSAQA. The Extracellular portion of the chain corresponds to 22–530; it reads KDQDAGILII…DHHRQTPLEK (509 aa). The helical transmembrane segment at 531–551 threads the bilayer; sequence ALWILSAVVLLFVIMFVSYTF. Residues 552 to 569 lie on the Cytoplasmic side of the membrane; the sequence is YLRATLKKRIFKERRSLG.

The protein resides in the cell membrane. This is an uncharacterized protein from Bacillus subtilis (strain 168).